Here is a 445-residue protein sequence, read N- to C-terminus: AVMGRNLALNIESRGYTVSIFNRSREKTEEVIAENPGKKLVPYYTVKEFVESLETPRRILLMVKAGAGTDAAIDSLKPYLDKGDIIIDGGNTFFQDTIRRNRELSAEGFNFIGTGVSGGEEGALKGPSIMPGGQKEAYELVAPILTKIAAVAEDGEPCVTYIGADGAGHYVKMVHNGIEYGDMQLIAEAYSLLKGGLNLSNEELAQTFTEWNNGELSSYLIDITKDIFTKKDEDGNYLVDVILDEAANKGTGKWTSQSALDLGEPLSLITESVFARYISSLKDQRVAASKVLSGPQAQSAGDKAEFIEKVRRALYLGKIVSYAQGFSQLRAASEEYNWDLNYGEIAKIFRAGCIIRAQFLQKITDAYAENPQIANLLLAPYFKQIADDYQQALRDVVAYAVQNGIPVPTFAAAVAYYDSYRAAVLPANLIQAQRDYFGAHTYKRI.

NADP(+) is bound by residues 1-4 (AVMG), 22-24 (NRS), 63-65 (VKA), and Asn-91. Substrate-binding positions include Asn-91 and 117–119 (SGG). Lys-172 (proton acceptor) is an active-site residue. 175–176 (HN) is a binding site for substrate. The active-site Proton donor is Glu-179. 5 residues coordinate substrate: Tyr-180, Lys-249, Arg-276, Arg-434, and His-440.

Belongs to the 6-phosphogluconate dehydrogenase family. In terms of assembly, homodimer.

The enzyme catalyses 6-phospho-D-gluconate + NADP(+) = D-ribulose 5-phosphate + CO2 + NADPH. Its pathway is carbohydrate degradation; pentose phosphate pathway; D-ribulose 5-phosphate from D-glucose 6-phosphate (oxidative stage): step 3/3. Its function is as follows. Catalyzes the oxidative decarboxylation of 6-phosphogluconate to ribulose 5-phosphate and CO(2), with concomitant reduction of NADP to NADPH. This is 6-phosphogluconate dehydrogenase, decarboxylating (gnd) from Shigella sonnei.